Reading from the N-terminus, the 1209-residue chain is DNA-directed RNA polymerase subunit beta' (1209 aa).

Residues Cys-60, Cys-62, Cys-75, and Cys-78 each coordinate Zn(2+). Mg(2+) contacts are provided by Asp-450, Asp-452, and Asp-454. Zn(2+)-binding residues include Cys-819, Cys-893, Cys-900, and Cys-903.

It belongs to the RNA polymerase beta' chain family. As to quaternary structure, the RNAP catalytic core consists of 2 alpha, 1 beta, 1 beta' and 1 omega subunit. When a sigma factor is associated with the core the holoenzyme is formed, which can initiate transcription. It depends on Mg(2+) as a cofactor. Zn(2+) is required as a cofactor.

It catalyses the reaction RNA(n) + a ribonucleoside 5'-triphosphate = RNA(n+1) + diphosphate. Functionally, DNA-dependent RNA polymerase catalyzes the transcription of DNA into RNA using the four ribonucleoside triphosphates as substrates. This is DNA-directed RNA polymerase subunit beta' from Streptococcus mutans serotype c (strain ATCC 700610 / UA159).